Consider the following 176-residue polypeptide: Ribosome maturation factor RimM (176 aa).

One can recognise a PRC barrel domain in the interval 93–166 (EGEYYHADLI…RVVIELPAEI (74 aa)).

It belongs to the RimM family. In terms of assembly, binds ribosomal protein uS19.

It localises to the cytoplasm. An accessory protein needed during the final step in the assembly of 30S ribosomal subunit, possibly for assembly of the head region. Essential for efficient processing of 16S rRNA. May be needed both before and after RbfA during the maturation of 16S rRNA. It has affinity for free ribosomal 30S subunits but not for 70S ribosomes. In Rhodopseudomonas palustris (strain BisB18), this protein is Ribosome maturation factor RimM.